Reading from the N-terminus, the 542-residue chain is Zinc finger protein 280A (542 aa).

Residues 66-185 (VTPGSNSRRK…RDSKRVKLRD (120 aa)) form a disordered region. Positions 107-122 (EGRSTDSPVTMKSSSE) are enriched in polar residues. Residues 128–143 (SSPQVVSPSSSDSLPP) are compositionally biased toward low complexity. Residues 161–185 (SSPDSKRLSTSDINSRDSKRVKLRD) are compositionally biased toward basic and acidic residues. 4 consecutive C2H2-type zinc fingers follow at residues 334–357 (TTCQ…DSVH), 364–387 (AVCK…KDHH), 423–445 (LLCL…CWRH), and 451–474 (LQCS…TKDH). Residues 499–520 (QPGSSGMASVIVSNTDPQSSPV) are compositionally biased toward polar residues. Residues 499 to 542 (QPGSSGMASVIVSNTDPQSSPVKTKKKTAMNTRDSRLPCSKDSS) form a disordered region.

It localises to the nucleus. Its function is as follows. May function as a transcription factor. In Homo sapiens (Human), this protein is Zinc finger protein 280A (ZNF280A).